The chain runs to 399 residues: Yellow-related salivary protein M10 (399 aa).

A signal peptide spans 1-18 (MKFILSVLALASFQHVFC). N-linked (GlcNAc...) asparagine glycans are attached at residues N29 and N83.

It belongs to the major royal jelly protein family. In terms of tissue distribution, salivary gland (at protein level).

It is found in the secreted. Functionally, probably modulates blood feeding of sand flies on vertebrate species by binding and sequestering different mediators involved in the host response. Functions as a chemoattractant for host neutrophils; likely acts through a G-protein-coupled receptor and effect is dependent on calcium influx and phosphatidylinositol 3-kinases (PI3K) activity. Its function is as follows. (Microbial infection) Probably enhances infection caused by Leishmania species in the host through augmentation of host neutrophil recruitment into the skin. This Phlebotomus duboscqi (Sandfly) protein is Yellow-related salivary protein M10.